The primary structure comprises 551 residues: Seventh homolog of septin 1 (551 aa).

Ser-2 carries the N-acetylserine modification. The Septin-type G domain occupies 20 to 339; it reads RGITYTMLLC…ENYRSEKLSS (320 aa). The interval 30–37 is G1 motif; the sequence is GPAGTGKT. GTP-binding positions include 30 to 37, Gly-138, 218 to 226, and Arg-288; these read GPAGTGKT and RADSFTKEE. Residues 135–138 form a G3 motif region; sequence MTHG. The interval 217-220 is G4 motif; that stretch reads TRAD. The segment at 381–417 is disordered; it reads NLRADTPRNQVSGNFKENEYEDNGEHDSAENEQEMSP. Tyr-400 carries the post-translational modification Phosphotyrosine. Phosphoserine occurs at positions 408 and 416. Positions 418-518 form a coiled coil; the sequence is VRQLGREIKQ…KLINQNKLNG (101 aa). Glycyl lysine isopeptide (Lys-Gly) (interchain with G-Cter in SUMO) cross-links involve residues Lys-426 and Lys-437. A phosphoserine mark is found at Ser-447, Ser-460, Ser-519, Ser-520, Ser-522, and Ser-525. A disordered region spans residues 515–551; sequence KLNGSSSSINSLQQSTRSQIKKNDTYTDLASIASGRD. The span at 519 to 532 shows a compositional bias: low complexity; it reads SSSSINSLQQSTRS. A Phosphothreonine modification is found at Thr-539. 2 positions are modified to phosphoserine: Ser-545 and Ser-548.

Belongs to the TRAFAC class TrmE-Era-EngA-EngB-Septin-like GTPase superfamily. Septin GTPase family. As to quaternary structure, component of the septin complex which consists of CDC3, CDC10, CDC11, CDC12 and probably SHS1 and rearranges to a cortical collar of highly ordered filaments at the mother-bud-neck. A complex formed by CDC3, CDC10, CDC11 and CDC12 is capable of forming long filaments in vitro and the components seem to be present in a 2:2:2:2 arrangement in vivo. The filaments are proposed to be formed by the end-to-end polymerization of CDC3-CDC12-CDC11 complexes with CDC10 serving as a bridge to bundle the polymers into paired filaments. Component of the GIN4 complex composed of at least BNI5, CDC3, CDC10, CDC11, CDC12, GIN4, NAP1 and SHS1. Self-associates. Interacts with CDC11 and SPA2. In terms of processing, phosphorylated by GIN4 and CLA4. Phosphorylation state is essential for septin ring dynamics during telophase. Post-translationally, sumoylated during mitosis on the mother cell side of the bud neck. Sumoylation probably plays a central role in regulating septin ring disassembly during the cell cycle.

Its subcellular location is the membrane. The protein localises to the bud neck. In terms of biological role, septins are GTPases involved in cytokinesis that assemble early in the cell cycle as a patch at the incipient bud site and form a ring approximately 15 minutes before bud emergence, which transforms into an hour-glass shaped collar of cortical filaments that spans both sides of the mother-bud neck. This collar persists until just before cytokinesis, when it splits into two rings that occupy opposite sides of the neck. The septins at the bud neck serve as a structural scaffold that recruits different components involved in diverse processes at specific stages during the cell cycle. Many proteins bind asymmetrically to the septin collar. The septin assembly is regulated by protein kinases GIN4 and/or CLA4. May act by recruiting MYO1 and HOF1, a protein involved in septation, to the site of cleavage. Septins are also involved in cell morphogenesis, bud site selection, chitin deposition, cell cycle regulation, cell compartmentalization and spore wall formation. CDCd11 with SHS1 11 are involved in the recruitment of BNI5 and thereby ensure efficient localization at the bud neck of MYO1, the type II myosin of the actomyosin contractile ring. The chain is Seventh homolog of septin 1 from Saccharomyces cerevisiae (strain ATCC 204508 / S288c) (Baker's yeast).